We begin with the raw amino-acid sequence, 259 residues long: Ribosomal RNA small subunit methyltransferase A (259 aa).

The S-adenosyl-L-methionine site is built by asparagine 12, leucine 14, glycine 39, glutamate 60, aspartate 84, and asparagine 102.

This sequence belongs to the class I-like SAM-binding methyltransferase superfamily. rRNA adenine N(6)-methyltransferase family. RsmA subfamily.

The protein resides in the cytoplasm. It catalyses the reaction adenosine(1518)/adenosine(1519) in 16S rRNA + 4 S-adenosyl-L-methionine = N(6)-dimethyladenosine(1518)/N(6)-dimethyladenosine(1519) in 16S rRNA + 4 S-adenosyl-L-homocysteine + 4 H(+). Functionally, specifically dimethylates two adjacent adenosines (A1518 and A1519) in the loop of a conserved hairpin near the 3'-end of 16S rRNA in the 30S particle. May play a critical role in biogenesis of 30S subunits. This Nitrosospira multiformis (strain ATCC 25196 / NCIMB 11849 / C 71) protein is Ribosomal RNA small subunit methyltransferase A.